Reading from the N-terminus, the 441-residue chain is Myocyte-specific enhancer factor 2C (441 aa).

The region spanning 1 to 61 (MGRKKIQITR…NKLFQYASTD (61 aa)) is the MADS-box domain. Lysine 4 bears the N6-acetyllysine mark. Residues 58-86 (ASTDMDKVLLKYTEYNEPHESRTNSDIVE) constitute a DNA-binding region (mef2-type). Serine 59 bears the Phosphoserine; by CK2 mark. The segment at 91-116 (KGLNGCDSPDPDADDSVGHSPESEDK) is disordered. Serine 98, serine 106, and serine 110 each carry phosphoserine. 2 positions are modified to N6-acetyllysine: lysine 116 and lysine 119. Residues 180-224 (NSMSPGVTHRPPSAGNTGGLMGGDLTSGAGTSAGNGYGNPRNSPG) form a disordered region. Phosphoserine occurs at positions 222 and 228. N6-acetyllysine occurs at positions 234 and 239. The residue at position 240 (serine 240) is a Phosphoserine. N6-acetyllysine occurs at positions 252 and 264. Residues 271–278 (SEDVDLLL) form a beta domain region. 2 positions are modified to phosphothreonine; by MAPK7 and MAPK14: threonine 293 and threonine 300. Residues 353-441 (QHLHSMPPSA…RMRLSEGWAT (89 aa)) are disordered. The span at 362 to 377 (ALSQLGDRTTTPSRYP) shows a compositional bias: polar residues. At serine 387 the chain carries Phosphoserine; by MAPK7. Low complexity predominate over residues 387–400 (SPVDSLSSCSSSYD). Basic and acidic residues predominate over residues 401–411 (GSDREDHRNEF). Residue serine 413 is modified to Phosphoserine.

This sequence belongs to the MEF2 family. As to quaternary structure, forms a complex with class II HDACs in undifferentiating cells. On myogenic differentiation, HDACs are released into the cytoplasm allowing MEF2s to interact with other proteins for activation. Interacts with EP300 in differentiating cells; the interaction acetylates MEF2C leading to increased DNA binding and activation. Interacts with HDAC7 and CARM1. Interacts with HDAC4, HDAC7 and HDAC9; the interaction with HDACs represses transcriptional activity. Interacts with LPIN1. Interacts with MYOCD. Interacts with AKAP13. Interacts with FOXK1; the interaction inhibits MEF2C transactivation activity. Interacts (via N-terminus) with HABP4; this interaction decreases DNA-binding activity of MEF2C in myocardial cells in response to mechanical stress. Interacts with JPH2; interaction specifically takes place with the Junctophilin-2 N-terminal fragment cleavage product of JPH2. Interacts (via MADS box) with SOX18. Interacts with PHF7; the interaction promotes MEF2C binding to its transcription targets. In terms of processing, phosphorylation on Ser-59 enhances DNA binding activity. Post-translationally, acetylated by p300 on several sites in diffentiating myocytes. Acetylation on Lys-4 increases DNA binding and transactivation. Proteolytically cleaved in cerebellar granule neurons, probably by caspase 7, following neurotoxicity.

It localises to the nucleus. The protein resides in the cytoplasm. It is found in the sarcoplasm. Transcription activator which binds specifically to the MEF2 element present in the regulatory regions of many muscle-specific genes. Controls cardiac morphogenesis and myogenesis, and is also involved in vascular development. Enhances transcriptional activation mediated by SOX18. Plays an essential role in hippocampal-dependent learning and memory by suppressing the number of excitatory synapses and thus regulating basal and evoked synaptic transmission. Crucial for normal neuronal development, distribution, and electrical activity in the neocortex. Necessary for proper development of megakaryocytes and platelets and for bone marrow B-lymphopoiesis. Required for B-cell survival and proliferation in response to BCR stimulation, efficient IgG1 antibody responses to T-cell-dependent antigens and for normal induction of germinal center B-cells. May also be involved in neurogenesis and in the development of cortical architecture. This chain is Myocyte-specific enhancer factor 2C, found in Bos taurus (Bovine).